Consider the following 769-residue polypeptide: Calcium up-regulated protein B (769 aa).

A disordered region spans residues 1-22 (MINIEDISKSSNQSEEKQLKST). 2 Ricin B-type lectin domains span residues 25–145 (KPKY…WTTF) and 158–296 (FQSK…WITN).

It belongs to the cup family.

The protein localises to the cytoplasm. The protein resides in the membrane. In terms of biological role, may play an important role in stabilizing and/or regulating the cell membrane during Ca(2+) stress or certain stages of development. This Dictyostelium discoideum (Social amoeba) protein is Calcium up-regulated protein B (cupB).